A 428-amino-acid chain; its full sequence is Sulfhydrogenase 1 subunit alpha (428 aa).

Residues Cys65, Cys68, Cys418, and Cys421 each contribute to the Ni(2+) site. Cys68 contacts Fe cation. Cys421 lines the Fe cation pocket.

The protein belongs to the [NiFe]/[NiFeSe] hydrogenase large subunit family. Heterotetramer of alpha, beta, gamma and delta subunits. The nickel-containing alpha and delta subunits constitute the hydrogenase activity. The beta and gamma subunits (flavin-containing dimer) constitute the sulfur reductase activity. Ni(2+) is required as a cofactor. Fe cation serves as cofactor.

The protein localises to the cytoplasm. It catalyses the reaction H2 + NADP(+) = NADPH + H(+). Functionally, part of a bifunctional enzyme complex that functions as an NADPH-dependent hydrogen-evolving hydrogenase with sulfur-reducing activity. May play a role in hydrogen cycling during fermentative growth. Activity not exhibited with NAD. The alpha and delta subunits form the hydrogenase component that catalyzes the reduction of protons to evolve hydrogen. The polypeptide is Sulfhydrogenase 1 subunit alpha (Pyrococcus furiosus (strain ATCC 43587 / DSM 3638 / JCM 8422 / Vc1)).